A 291-amino-acid polypeptide reads, in one-letter code: 5-hydroxytryptamine receptor 1D (291 aa).

Residues 30 to 54 form a helical membrane-spanning segment; it reads LCDIWLSSDITCCTASILHLCVIAL. An intrachain disulfide couples C31 to C108. D38 and C42 together coordinate serotonin. The DRY motif; important for ligand-induced conformation changes motif lies at 55 to 57; it reads DRY. A helical transmembrane segment spans residues 75 to 96; it reads AAAMIAIVWAISICISIPPLFW. N-linked (GlcNAc...) asparagine glycosylation occurs at N111. 3 consecutive transmembrane segments (helical) span residues 115–138, 221–246, and 256–279; these read ISYT…ILYG, KTLG…VLPI, and ALFD…YTVF. S241 is a binding site for serotonin. The short motif at 272–276 is the NPxxY motif; important for ligand-induced conformation changes and signaling element; it reads NPIIY.

Belongs to the G-protein coupled receptor 1 family. Homodimer. Heterodimer with HTR1B.

It localises to the cell membrane. G-protein coupled receptor for 5-hydroxytryptamine (serotonin). Also functions as a receptor for ergot alkaloid derivatives, various anxiolytic and antidepressant drugs and other psychoactive substances. Ligand binding causes a conformation change that triggers signaling via guanine nucleotide-binding proteins (G proteins) and modulates the activity of downstream effectors, such as adenylate cyclase. HTR1D is coupled to G(i)/G(o) G alpha proteins and mediates inhibitory neurotransmission by inhibiting adenylate cyclase activity. Regulates the release of 5-hydroxytryptamine in the brain, and thereby affects neural activity. May also play a role in regulating the release of other neurotransmitters. May play a role in vasoconstriction. This chain is 5-hydroxytryptamine receptor 1D (HTR1D), found in Sus scrofa (Pig).